The following is a 303-amino-acid chain: UDP-3-O-acyl-N-acetylglucosamine deacetylase (303 aa).

Zn(2+) contacts are provided by His-78, His-237, and Asp-241. The active-site Proton donor is His-264.

Belongs to the LpxC family. Zn(2+) is required as a cofactor.

It catalyses the reaction a UDP-3-O-[(3R)-3-hydroxyacyl]-N-acetyl-alpha-D-glucosamine + H2O = a UDP-3-O-[(3R)-3-hydroxyacyl]-alpha-D-glucosamine + acetate. It functions in the pathway glycolipid biosynthesis; lipid IV(A) biosynthesis; lipid IV(A) from (3R)-3-hydroxytetradecanoyl-[acyl-carrier-protein] and UDP-N-acetyl-alpha-D-glucosamine: step 2/6. In terms of biological role, catalyzes the hydrolysis of UDP-3-O-myristoyl-N-acetylglucosamine to form UDP-3-O-myristoylglucosamine and acetate, the committed step in lipid A biosynthesis. The sequence is that of UDP-3-O-acyl-N-acetylglucosamine deacetylase from Pseudomonas putida (strain ATCC 700007 / DSM 6899 / JCM 31910 / BCRC 17059 / LMG 24140 / F1).